The primary structure comprises 163 residues: Allophycocyanin alpha-B chain (163 aa).

The residue at position 71 (N71) is an N4-methylasparagine. C81 is a (2R,3E)-phycocyanobilin binding site.

This sequence belongs to the phycobiliprotein family. Post-translationally, contains one covalently linked bilin chromophore.

It localises to the plastid. It is found in the chloroplast thylakoid membrane. Allophycocyanin is a photosynthetic bile pigment-protein complex with maximum absorption at approximately 650 nanometers. In Cyanidium caldarium (Red alga), this protein is Allophycocyanin alpha-B chain (apcD).